Here is a 479-residue protein sequence, read N- to C-terminus: Dihydrolipoyl dehydrogenase (479 aa).

Residues 41-50, Lys59, Ala124, and 153-155 contribute to the FAD site; these read EKRGALGGTC and TGS. Cysteines 50 and 55 form a disulfide. NAD(+)-binding positions include 190-197, Glu213, Ile247, and Gly284; that span reads GGGVIGLE. Residues Asp325 and 332-335 contribute to the FAD site; that span reads MLAH. The active-site Proton acceptor is the His458.

This sequence belongs to the class-I pyridine nucleotide-disulfide oxidoreductase family. As to quaternary structure, homodimer. The cofactor is FAD.

It catalyses the reaction N(6)-[(R)-dihydrolipoyl]-L-lysyl-[protein] + NAD(+) = N(6)-[(R)-lipoyl]-L-lysyl-[protein] + NADH + H(+). This Trypanosoma brucei brucei protein is Dihydrolipoyl dehydrogenase.